The sequence spans 75 residues: Large ribosomal subunit protein bL31 (75 aa).

Residues Cys16, Cys18, Cys37, and Cys40 each coordinate Zn(2+).

Belongs to the bacterial ribosomal protein bL31 family. Type A subfamily. As to quaternary structure, part of the 50S ribosomal subunit. Zn(2+) is required as a cofactor.

In terms of biological role, binds the 23S rRNA. This is Large ribosomal subunit protein bL31 from Legionella pneumophila (strain Paris).